The primary structure comprises 87 residues: Keratin-associated protein 7-1 (87 aa).

The 11 X 2 AA repeats of G-[YCGS] stretch occupies residues glycine 43–tyrosine 84.

The protein belongs to the KRTAP type 7 family. As to quaternary structure, interacts with hair keratins. Expressed in the upper portion of the hair cortex.

Functionally, in the hair cortex, hair keratin intermediate filaments are embedded in an interfilamentous matrix, consisting of hair keratin-associated proteins (KRTAP), which are essential for the formation of a rigid and resistant hair shaft through their extensive disulfide bond cross-linking with abundant cysteine residues of hair keratins. The matrix proteins include the high-sulfur and high-glycine-tyrosine keratins. This is Keratin-associated protein 7-1 (KRTAP7-1) from Homo sapiens (Human).